Consider the following 162-residue polypeptide: uncharacterized protein (162 aa).

5 helical membrane-spanning segments follow: residues 15 to 40 (TIYS…YFLL), 47 to 66 (ISML…TTAL), 76 to 98 (YSIL…FLVY), 105 to 124 (KWLG…DPLL), and 128 to 150 (GYAV…WLVI).

The protein resides in the cell membrane. This is an uncharacterized protein from Archaeoglobus fulgidus (strain ATCC 49558 / DSM 4304 / JCM 9628 / NBRC 100126 / VC-16).